Consider the following 344-residue polypeptide: uncharacterized protein (344 aa).

The N-terminal stretch at 1–19 (MRIIFYLTLLLFIFNKVKS) is a signal peptide. A propeptide spans 323 to 344 (SATRNQISIMVLILSVLLVLIL) (removed in mature form).

Its subcellular location is the cell membrane. This is an uncharacterized protein from Dictyostelium discoideum (Social amoeba).